We begin with the raw amino-acid sequence, 377 residues long: Succinyl-diaminopimelate desuccinylase (377 aa).

H66 contributes to the Zn(2+) binding site. D68 is an active-site residue. D99 serves as a coordination point for Zn(2+). E133 serves as the catalytic Proton acceptor. 3 residues coordinate Zn(2+): E134, E162, and H348.

It belongs to the peptidase M20A family. DapE subfamily. Homodimer. Zn(2+) is required as a cofactor. Requires Co(2+) as cofactor.

The enzyme catalyses N-succinyl-(2S,6S)-2,6-diaminopimelate + H2O = (2S,6S)-2,6-diaminopimelate + succinate. The protein operates within amino-acid biosynthesis; L-lysine biosynthesis via DAP pathway; LL-2,6-diaminopimelate from (S)-tetrahydrodipicolinate (succinylase route): step 3/3. Functionally, catalyzes the hydrolysis of N-succinyl-L,L-diaminopimelic acid (SDAP), forming succinate and LL-2,6-diaminopimelate (DAP), an intermediate involved in the bacterial biosynthesis of lysine and meso-diaminopimelic acid, an essential component of bacterial cell walls. This is Succinyl-diaminopimelate desuccinylase from Xylella fastidiosa (strain 9a5c).